Reading from the N-terminus, the 569-residue chain is Atlastin-2 (569 aa).

An N-terminal hypervariable region (HVR) region spans residues 1–49 (MAEGGSLRNRTRFGSRSNEAMNHVDYPDENFVEEIQLNSDTEVMEKPRP). Residues 1–464 (MAEGGSLRNR…NIFYAARTPA (464 aa)) are Cytoplasmic-facing. One can recognise a GB1/RHD3-type G domain in the interval 80–324 (DLNVVVLSVA…LVPLLLAPEN (245 aa)). R93, K94, G95, K96, S97, F98, Q163, R232, and D233 together coordinate GDP. Residues R93, K94, G95, K96, S97, and F98 each contribute to the GTP site. S97 contributes to the Mg(2+) binding site. Residues R232 and D233 each contribute to the GTP site. Positions 244–272 (LEGGNKFLEKRLQVKQNQHEELQNVRKHI) form a coiled coil. Residues V291 and N294 each coordinate GDP. V291 provides a ligand contact to GTP. The tract at residues 362–453 (MLQATAEANN…YANFLKHNDG (92 aa)) is 3HB (three-helix bundle) domain. The segment at 454-462 (KNIFYAART) is linker. Residues 465–485 (TLFAVMFAMYIISGLTGFIGM) traverse the membrane as a helical segment. At 486–487 (NS) the chain is on the lumenal side. The chain crosses the membrane as a helical span at residues 488–508 (IATICNLIMGLTLLSFCTWAY). Residues 509–569 (VKYSGEFREL…DQVSGRLKTN (61 aa)) are Cytoplasmic-facing. Residues 535–569 (KPLSDNLMEDNIRQTVRNSIKAGLTDQVSGRLKTN) are autoinhibitory domain.

Belongs to the TRAFAC class dynamin-like GTPase superfamily. GB1/RHD3 GTPase family. GB1 subfamily. As to quaternary structure, monomeric and homodimeric. The homodimer, transiently formed by two molecules on opposing membranes, is the active form mediating ER membrane fusion.

Its subcellular location is the endoplasmic reticulum membrane. It catalyses the reaction GTP + H2O = GDP + phosphate + H(+). Its function is as follows. Atlastin-2 (ATL2) is a membrane-anchored GTPase that mediates the GTP-dependent fusion of endoplasmic reticulum (ER) membranes, maintaining the continuous ER network. It facilitates the formation of three-way junctions where ER tubules intersect. Two atlastin-2 on neighboring ER tubules bind GTP and form loose homodimers through the GB1/RHD3-type G domains and 3HB regions. Upon GTP hydrolysis, the 3HB regions tighten, pulling the membranes together to drive their fusion. After fusion, the homodimer disassembles upon release of inorganic phosphate (Pi). Subsequently, GDP dissociates, resetting the monomers to a conformation ready for a new fusion cycle. This Xenopus laevis (African clawed frog) protein is Atlastin-2 (atl2).